A 283-amino-acid polypeptide reads, in one-letter code: 2-dehydro-3-deoxyphosphooctonate aldolase (283 aa).

This sequence belongs to the KdsA family.

The protein localises to the cytoplasm. It carries out the reaction D-arabinose 5-phosphate + phosphoenolpyruvate + H2O = 3-deoxy-alpha-D-manno-2-octulosonate-8-phosphate + phosphate. The protein operates within carbohydrate biosynthesis; 3-deoxy-D-manno-octulosonate biosynthesis; 3-deoxy-D-manno-octulosonate from D-ribulose 5-phosphate: step 2/3. It participates in bacterial outer membrane biogenesis; lipopolysaccharide biosynthesis. The protein is 2-dehydro-3-deoxyphosphooctonate aldolase of Vibrio parahaemolyticus serotype O3:K6 (strain RIMD 2210633).